The chain runs to 437 residues: Trigger factor (437 aa).

The 87-residue stretch at 174-260 (GDFVQISFEG…VKSLKKKIFP (87 aa)) folds into the PPIase FKBP-type domain.

The protein belongs to the FKBP-type PPIase family. Tig subfamily.

The protein resides in the cytoplasm. It carries out the reaction [protein]-peptidylproline (omega=180) = [protein]-peptidylproline (omega=0). Its function is as follows. Involved in protein export. Acts as a chaperone by maintaining the newly synthesized protein in an open conformation. Functions as a peptidyl-prolyl cis-trans isomerase. The polypeptide is Trigger factor (Koribacter versatilis (strain Ellin345)).